The sequence spans 507 residues: ATP synthase subunit alpha, chloroplastic (507 aa).

Position 170 to 177 (G170 to T177) interacts with ATP.

It belongs to the ATPase alpha/beta chains family. F-type ATPases have 2 components, CF(1) - the catalytic core - and CF(0) - the membrane proton channel. CF(1) has five subunits: alpha(3), beta(3), gamma(1), delta(1), epsilon(1). CF(0) has four main subunits: a, b, b' and c.

It is found in the plastid. The protein resides in the chloroplast thylakoid membrane. It carries out the reaction ATP + H2O + 4 H(+)(in) = ADP + phosphate + 5 H(+)(out). Functionally, produces ATP from ADP in the presence of a proton gradient across the membrane. The alpha chain is a regulatory subunit. This chain is ATP synthase subunit alpha, chloroplastic, found in Ipomoea purpurea (Common morning glory).